The sequence spans 205 residues: Cryptic plasmid protein C (205 aa).

Positions 142 to 205 (THGYSDPDDP…RAGNAGKGRF (64 aa)) are disordered. Over residues 155–174 (QSMTQAKDLPRNTQEAAQSI) the composition is skewed to polar residues. The span at 189-205 (QAKKPRRRAGNAGKGRF) shows a compositional bias: basic residues.

This Neisseria gonorrhoeae protein is Cryptic plasmid protein C (cppC).